Consider the following 581-residue polypeptide: Multidrug and toxin extrusion protein 2 (581 aa).

Over 1 to 33 (MDSLQDTVPLDHGGCCPALSRLVPRGFGTEMWT) the chain is Cytoplasmic. The chain crosses the membrane as a helical span at residues 34–54 (LFALSGPLFLFQVLTFMIYIV). Over 55–66 (STVFCGHLGKVE) the chain is Extracellular. Residues 67–87 (LASVTLAVAFVNVCGVSVGVG) form a helical membrane-spanning segment. The Cytoplasmic portion of the chain corresponds to 88 to 119 (LSSACDTLMSQSFGSPNKKHVGVILQRGALVL). Residues 120 to 140 (LLCCLPCWALFLNTQHILLLF) form a helical membrane-spanning segment. The Extracellular segment spans residues 141–153 (RQDPEVSRLTQDY). A helical transmembrane segment spans residues 154–174 (VMIFIPGLPVIFLYNLLAKYL). Residues 175-183 (QNQKITWPQ) lie on the Cytoplasmic side of the membrane. Residues 184–204 (VLSGVVGNCVNGVANYALVSV) form a helical membrane-spanning segment. At 205–212 (LNLGVRGS) the chain is on the extracellular side. The helical transmembrane segment at 213-233 (AYANIISQFAQTVFLLLYIVL) threads the bilayer. Topologically, residues 234 to 253 (KKLHLETWAGWSSQCLQDWG) are cytoplasmic. The helical transmembrane segment at 254 to 273 (PFFSLAVPSMLMICVEWWAY) threads the bilayer. Residues 274-317 (EIGSFLMGLLSVVDLSAQAVIYEVATVTYMRHSHHLAYTAHVAR) are Extracellular-facing. Residues 318-338 (IPLGLSIGVCVRVGMALGAAD) traverse the membrane as a helical segment. At 339 to 346 (TVQAKRSA) the chain is on the cytoplasmic side. A helical transmembrane segment spans residues 347–367 (VSGVLSIVGISLVLGTLISIL). At 368-380 (KNQLGHIFTNDED) the chain is on the extracellular side. A helical transmembrane segment spans residues 381-401 (VIALVSQVLPVYSVFHVFEAI). Residues 402–420 (CCVYGGVLRGTGKQAFGAA) lie on the Cytoplasmic side of the membrane. Residues 421–441 (VNAITYYIIGLPLGILLTFVV) traverse the membrane as a helical segment. Topologically, residues 442–444 (RMR) are extracellular. A helical membrane pass occupies residues 445-465 (IMGLWLGMLACVFLATAAFVA). At 466-557 (YTARLDWKLA…LSVKQLVIRR (92 aa)) the chain is on the cytoplasmic side. Residues 481-513 (KHSGQQQQQQRAESTATRSGPEKAVLSSVATGS) form a disordered region. The chain crosses the membrane as a helical span at residues 558 to 578 (GAALGAASATLMVGLTVRILA). The Extracellular portion of the chain corresponds to 579–581 (TRH).

This sequence belongs to the multi antimicrobial extrusion (MATE) (TC 2.A.66.1) family.

Its subcellular location is the cell membrane. The protein localises to the apical cell membrane. The enzyme catalyses thiamine(out) + H(+)(in) = thiamine(in) + H(+)(out). The catalysed reaction is estrone 3-sulfate(in) + H(+)(out) = estrone 3-sulfate(out) + H(+)(in). It carries out the reaction creatinine(in) + H(+)(out) = creatinine(out) + H(+)(in). In terms of biological role, multidrug efflux pump that functions as a H(+)/organic cation antiporter. Mediates the efflux of cationic compounds, such as the model cations, tetraethylammonium (TEA) and 1-methyl-4-phenylpyridinium (MPP+), the platinum-based drug oxaliplatin or weak bases that are positively charged at physiological pH, cimetidine or the antidiabetic drug metformin. Mediates the efflux of the endogenous compounds creatinine, thiamine and estrone-3-sulfate. Plays a physiological role in the excretion of drugs, toxins and endogenous metabolites through the kidney. This chain is Multidrug and toxin extrusion protein 2 (SLC47A2), found in Pongo abelii (Sumatran orangutan).